The following is a 601-amino-acid chain: Elongation factor 4 (601 aa).

Positions 6–188 (KFTRNFSIIA…AICYLLPPPV (183 aa)) constitute a tr-type G domain. GTP is bound by residues 18–23 (DHGKST) and 135–138 (NKID).

It belongs to the TRAFAC class translation factor GTPase superfamily. Classic translation factor GTPase family. LepA subfamily.

It is found in the cell inner membrane. The catalysed reaction is GTP + H2O = GDP + phosphate + H(+). Its function is as follows. Required for accurate and efficient protein synthesis under certain stress conditions. May act as a fidelity factor of the translation reaction, by catalyzing a one-codon backward translocation of tRNAs on improperly translocated ribosomes. Back-translocation proceeds from a post-translocation (POST) complex to a pre-translocation (PRE) complex, thus giving elongation factor G a second chance to translocate the tRNAs correctly. Binds to ribosomes in a GTP-dependent manner. The chain is Elongation factor 4 from Leptospira biflexa serovar Patoc (strain Patoc 1 / Ames).